The chain runs to 367 residues: Zinc transport system membrane protein TroD (367 aa).

9 helical membrane passes run 5–25 (VVLIAVVVSVACALCGVFLVL), 28–48 (ISLMSDAISHSVILGIVLGYF), 56–76 (FVPFVGAVIAGICSVICAELL), 87–107 (AVGLVFPAMFGLGVILVSLYA), 140–160 (SLVQMGSVLCGLLLLLALFFK), 170–190 (VLATSLGFSPTLINYGLMLAV), 201–221 (VGAVLVIALMITPPAAALLLT), 224–244 (LLLMLVLASLLASCASISGLF), and 251–271 (GSIAGAMATMAGVLFALVYLF).

The protein belongs to the ABC-3 integral membrane protein family.

The protein resides in the cell membrane. In terms of biological role, part of an ATP-driven transport system TroABCD for zinc. The protein is Zinc transport system membrane protein TroD (troD) of Treponema pallidum (strain Nichols).